Consider the following 369-residue polypeptide: Dual-specificity RNA methyltransferase RlmN (369 aa).

The active-site Proton acceptor is Glu96. In terms of domain architecture, Radical SAM core spans 102 to 338; the sequence is DGERGTLCVS…VTTIRTTRGD (237 aa). Cys109 and Cys344 form a disulfide bridge. Positions 116, 120, and 123 each coordinate [4Fe-4S] cluster. S-adenosyl-L-methionine-binding positions include 169-170, Ser201, 223-225, and Asn301; these read GE and SLH. Cys344 functions as the S-methylcysteine intermediate in the catalytic mechanism.

The protein belongs to the radical SAM superfamily. RlmN family. Requires [4Fe-4S] cluster as cofactor.

It localises to the cytoplasm. It catalyses the reaction adenosine(2503) in 23S rRNA + 2 reduced [2Fe-2S]-[ferredoxin] + 2 S-adenosyl-L-methionine = 2-methyladenosine(2503) in 23S rRNA + 5'-deoxyadenosine + L-methionine + 2 oxidized [2Fe-2S]-[ferredoxin] + S-adenosyl-L-homocysteine. It carries out the reaction adenosine(37) in tRNA + 2 reduced [2Fe-2S]-[ferredoxin] + 2 S-adenosyl-L-methionine = 2-methyladenosine(37) in tRNA + 5'-deoxyadenosine + L-methionine + 2 oxidized [2Fe-2S]-[ferredoxin] + S-adenosyl-L-homocysteine. In terms of biological role, specifically methylates position 2 of adenine 2503 in 23S rRNA and position 2 of adenine 37 in tRNAs. m2A2503 modification seems to play a crucial role in the proofreading step occurring at the peptidyl transferase center and thus would serve to optimize ribosomal fidelity. This chain is Dual-specificity RNA methyltransferase RlmN, found in Marinobacter nauticus (strain ATCC 700491 / DSM 11845 / VT8) (Marinobacter aquaeolei).